A 456-amino-acid chain; its full sequence is Glycerol-3-phosphate acyltransferase 4 (456 aa).

The signal sequence occupies residues 1–37 (MFLLLPFDSLIVSLLGISLTVLFTLLLVFIIVPAVFG). Transmembrane regions (helical) follow at residues 156–176 (ISLRLTVLWGLGVLIRYCLLL) and 180–200 (IALAFTGISLLVVGTTMVGYL). A glycan (N-linked (GlcNAc...) asparagine) is linked at N247. The HXXXXD motif motif lies at 248–253 (HTSPID). N-linked (GlcNAc...) asparagine glycosylation is found at N327, N328, and N362.

The protein belongs to the 1-acyl-sn-glycerol-3-phosphate acyltransferase family.

The protein resides in the endoplasmic reticulum membrane. The catalysed reaction is sn-glycerol 3-phosphate + an acyl-CoA = a 1-acyl-sn-glycero-3-phosphate + CoA. The enzyme catalyses dodecanoyl-CoA + sn-glycerol 3-phosphate = 1-dodecanoyl-sn-glycerol 3-phosphate + CoA. It carries out the reaction sn-glycerol 3-phosphate + hexadecanoyl-CoA = 1-hexadecanoyl-sn-glycero-3-phosphate + CoA. It catalyses the reaction sn-glycerol 3-phosphate + octadecanoyl-CoA = 1-octadecanoyl-sn-glycero-3-phosphate + CoA. The catalysed reaction is sn-glycerol 3-phosphate + (9Z)-octadecenoyl-CoA = 1-(9Z-octadecenoyl)-sn-glycero-3-phosphate + CoA. The enzyme catalyses (9Z,12Z)-octadecadienoyl-CoA + sn-glycerol 3-phosphate = 1-(9Z,12Z)-octadecadienoyl-sn-glycero-3-phosphate + CoA. Its pathway is phospholipid metabolism; CDP-diacylglycerol biosynthesis; CDP-diacylglycerol from sn-glycerol 3-phosphate: step 1/3. Functionally, converts glycerol-3-phosphate to 1-acyl-sn-glycerol-3-phosphate (lysophosphatidic acid or LPA) by incorporating an acyl moiety at the sn-1 position of the glycerol backbone. Active against both saturated and unsaturated long-chain fatty acyl-CoAs. Protects cells against lipotoxicity. The sequence is that of Glycerol-3-phosphate acyltransferase 4 from Bos taurus (Bovine).